We begin with the raw amino-acid sequence, 300 residues long: (R)-3-hydroxydecanoyl-ACP:CoA transacylase (300 aa).

Positions 29 to 253 (TIILVNGSLS…HTIRNAGHFI (225 aa)) constitute an AB hydrolase-1 domain.

The protein operates within polyester biosynthesis; polyhydroxyalkanoate biosynthesis. Its function is as follows. Catalyzes the transfer of the acyl moiety from in vitro synthesized 3-hydroxydecanoyl-CoA to acyl carrier protein. This is (R)-3-hydroxydecanoyl-ACP:CoA transacylase (phaG) from Pseudomonas aeruginosa (strain ATCC 15692 / DSM 22644 / CIP 104116 / JCM 14847 / LMG 12228 / 1C / PRS 101 / PAO1).